The chain runs to 314 residues: MNQLSESYKARLSNLLPSCVAFFKYLLKRLTHDRVNVNAGYLAYITLLSIVPMLTVLLSILSKFPVFANVGEVLQGYIIENFVPASGEAVHTALQEFVANTGKMSAVGGGFLFIAALMLISNIDKNLNYIWRVKDKRRLVFSFSMYWMVLTLGPILVGASIAATSYVTSLQILENETLSGAFNLFLRWLPLLLSFFAFLGLYILVPNKKVHLAHGAVGAAVAAILFELSKKGFALYITQFPSYQLIYGALAAIPILFVWVYLCWMIVLLGAEVTAALGEQEHWSEDLDMIHSSAESQLANEGSESSDSANSTSQ.

The next 6 membrane-spanning stretches (helical) occupy residues 41–61, 104–124, 139–159, 185–205, 217–237, and 249–269; these read YLAY…LSIL, MSAV…SNID, LVFS…LVGA, FLRW…YILV, VGAA…ALYI, and ALAA…IVLL. A disordered region spans residues 295–314; it reads ESQLANEGSESSDSANSTSQ.

It belongs to the UPF0761 family.

It is found in the cell inner membrane. This Vibrio parahaemolyticus serotype O3:K6 (strain RIMD 2210633) protein is UPF0761 membrane protein VP0125.